The sequence spans 540 residues: Glucose-6-phosphate isomerase (540 aa).

The Proton donor role is filled by Glu350. Active-site residues include His381 and Lys503.

The protein belongs to the GPI family.

It localises to the cytoplasm. It catalyses the reaction alpha-D-glucose 6-phosphate = beta-D-fructose 6-phosphate. It participates in carbohydrate biosynthesis; gluconeogenesis. It functions in the pathway carbohydrate degradation; glycolysis; D-glyceraldehyde 3-phosphate and glycerone phosphate from D-glucose: step 2/4. Its function is as follows. Catalyzes the reversible isomerization of glucose-6-phosphate to fructose-6-phosphate. In Burkholderia cenocepacia (strain ATCC BAA-245 / DSM 16553 / LMG 16656 / NCTC 13227 / J2315 / CF5610) (Burkholderia cepacia (strain J2315)), this protein is Glucose-6-phosphate isomerase.